The chain runs to 207 residues: Large ribosomal subunit protein uL4 (207 aa).

The tract at residues 58–78 is disordered; that stretch reads AGGGKKPWRQKGTGRARHGSI. Basic residues predominate over residues 63–77; the sequence is KPWRQKGTGRARHGS.

Belongs to the universal ribosomal protein uL4 family. As to quaternary structure, part of the 50S ribosomal subunit.

In terms of biological role, one of the primary rRNA binding proteins, this protein initially binds near the 5'-end of the 23S rRNA. It is important during the early stages of 50S assembly. It makes multiple contacts with different domains of the 23S rRNA in the assembled 50S subunit and ribosome. Functionally, forms part of the polypeptide exit tunnel. The protein is Large ribosomal subunit protein uL4 of Aster yellows witches'-broom phytoplasma (strain AYWB).